We begin with the raw amino-acid sequence, 440 residues long: Protein CyaD (440 aa).

Over 1–55 (MRRALRELAARHGRVLAASWRQRHRRPAGWFDPVETEFLPSALSLQERPISPTAR) the chain is Cytoplasmic. Residues 56–75 (WLARILMALAAGALVWSVVG) traverse the membrane as a helical segment. The Periplasmic portion of the chain corresponds to 76-440 (KTEIVVHAAG…RHAGESLGER (365 aa)).

This sequence belongs to the membrane fusion protein (MFP) (TC 8.A.1) family.

It is found in the cell inner membrane. In terms of biological role, cyaD is necessary for transport of calmodulin-sensitive adenylate cyclase-hemolysin (cyclolysin). The protein is Protein CyaD (cyaD) of Bordetella pertussis (strain ATCC 9797 / DSM 5571 / CCUG 30873 / LMG 14455 / NCTC 10739 / 18323).